We begin with the raw amino-acid sequence, 90 residues long: Essential MCU regulator, mitochondrial (90 aa).

Residues Gly-49 to Ala-68 traverse the membrane as a helical segment.

Belongs to the SMDT1/EMRE family.

It localises to the mitochondrion inner membrane. Functionally, essential regulatory subunit of the mitochondrial calcium uniporter (mcu-1) channel, a protein that mediates calcium uptake into mitochondria. The sequence is that of Essential MCU regulator, mitochondrial from Caenorhabditis elegans.